The chain runs to 149 residues: Ribonuclease H (149 aa).

Residues 5–146 (QRPHVVIFTD…ADELAREGLA (142 aa)) form the RNase H type-1 domain. Residues Asp-14, Glu-52, Asp-74, and Asp-138 each contribute to the Mg(2+) site.

The protein belongs to the RNase H family. In terms of assembly, monomer. The cofactor is Mg(2+).

Its subcellular location is the cytoplasm. It catalyses the reaction Endonucleolytic cleavage to 5'-phosphomonoester.. Endonuclease that specifically degrades the RNA of RNA-DNA hybrids. This is Ribonuclease H from Afipia carboxidovorans (strain ATCC 49405 / DSM 1227 / KCTC 32145 / OM5) (Oligotropha carboxidovorans).